The following is a 275-amino-acid chain: Large ribosomal subunit protein uL2 (275 aa).

The disordered stretch occupies residues 220–275 (VRGAAMNPRDHPHGGGEGRAPRGMPTPKTKWGKPARGVKTRHNPRTDPFIIRRRTR). Basic and acidic residues predominate over residues 227–239 (PRDHPHGGGEGRA). Residues 249 to 262 (KWGKPARGVKTRHN) are compositionally biased toward basic residues.

This sequence belongs to the universal ribosomal protein uL2 family. In terms of assembly, part of the 50S ribosomal subunit. Forms a bridge to the 30S subunit in the 70S ribosome.

Functionally, one of the primary rRNA binding proteins. Required for association of the 30S and 50S subunits to form the 70S ribosome, for tRNA binding and peptide bond formation. It has been suggested to have peptidyltransferase activity; this is somewhat controversial. Makes several contacts with the 16S rRNA in the 70S ribosome. This Roseiflexus sp. (strain RS-1) protein is Large ribosomal subunit protein uL2.